A 339-amino-acid polypeptide reads, in one-letter code: Ketol-acid reductoisomerase (NADP(+)) (339 aa).

The KARI N-terminal Rossmann domain occupies 1–182; it reads MRVYYDRDAD…GGGRAGIIET (182 aa). Residues 24-27, Arg48, Ser51, and 83-86 contribute to the NADP(+) site; these read YGSQ and DEGQ. His108 is a catalytic residue. Gly134 contributes to the NADP(+) binding site. Residues 183–328 enclose the KARI C-terminal knotted domain; the sequence is TFKEEVETDL…EKLRAMMPWI (146 aa). Mg(2+) is bound by residues Asp191, Glu195, Glu227, and Glu231. Ser252 lines the substrate pocket.

This sequence belongs to the ketol-acid reductoisomerase family. It depends on Mg(2+) as a cofactor.

It catalyses the reaction (2R)-2,3-dihydroxy-3-methylbutanoate + NADP(+) = (2S)-2-acetolactate + NADPH + H(+). The catalysed reaction is (2R,3R)-2,3-dihydroxy-3-methylpentanoate + NADP(+) = (S)-2-ethyl-2-hydroxy-3-oxobutanoate + NADPH + H(+). It participates in amino-acid biosynthesis; L-isoleucine biosynthesis; L-isoleucine from 2-oxobutanoate: step 2/4. It functions in the pathway amino-acid biosynthesis; L-valine biosynthesis; L-valine from pyruvate: step 2/4. Involved in the biosynthesis of branched-chain amino acids (BCAA). Catalyzes an alkyl-migration followed by a ketol-acid reduction of (S)-2-acetolactate (S2AL) to yield (R)-2,3-dihydroxy-isovalerate. In the isomerase reaction, S2AL is rearranged via a Mg-dependent methyl migration to produce 3-hydroxy-3-methyl-2-ketobutyrate (HMKB). In the reductase reaction, this 2-ketoacid undergoes a metal-dependent reduction by NADPH to yield (R)-2,3-dihydroxy-isovalerate. This is Ketol-acid reductoisomerase (NADP(+)) from Gluconobacter oxydans (strain 621H) (Gluconobacter suboxydans).